Here is a 194-residue protein sequence, read N- to C-terminus: Imidazoleglycerol-phosphate dehydratase (194 aa).

Belongs to the imidazoleglycerol-phosphate dehydratase family.

It is found in the cytoplasm. The enzyme catalyses D-erythro-1-(imidazol-4-yl)glycerol 3-phosphate = 3-(imidazol-4-yl)-2-oxopropyl phosphate + H2O. It functions in the pathway amino-acid biosynthesis; L-histidine biosynthesis; L-histidine from 5-phospho-alpha-D-ribose 1-diphosphate: step 6/9. In Bacillus anthracis (strain A0248), this protein is Imidazoleglycerol-phosphate dehydratase.